Consider the following 209-residue polypeptide: Kynurenine formamidase (209 aa).

W20 contacts substrate. H50, H54, and D56 together coordinate Zn(2+). The Proton donor/acceptor role is filled by H60. H161 and E173 together coordinate Zn(2+).

It belongs to the Cyclase 1 superfamily. KynB family. In terms of assembly, homodimer. The cofactor is Zn(2+).

The enzyme catalyses N-formyl-L-kynurenine + H2O = L-kynurenine + formate + H(+). It functions in the pathway amino-acid degradation; L-tryptophan degradation via kynurenine pathway; L-kynurenine from L-tryptophan: step 2/2. Functionally, catalyzes the hydrolysis of N-formyl-L-kynurenine to L-kynurenine, the second step in the kynurenine pathway of tryptophan degradation. This is Kynurenine formamidase from Bacillus anthracis.